Here is a 146-residue protein sequence, read N- to C-terminus: ATP synthase epsilon chain (146 aa).

The disordered stretch occupies residues serine 103–arginine 122.

Belongs to the ATPase epsilon chain family. As to quaternary structure, F-type ATPases have 2 components, CF(1) - the catalytic core - and CF(0) - the membrane proton channel. CF(1) has five subunits: alpha(3), beta(3), gamma(1), delta(1), epsilon(1). CF(0) has three main subunits: a, b and c.

It is found in the cell membrane. Produces ATP from ADP in the presence of a proton gradient across the membrane. The protein is ATP synthase epsilon chain of Lactobacillus johnsonii (strain CNCM I-12250 / La1 / NCC 533).